The chain runs to 168 residues: Peptide deformylase 1 (168 aa).

Fe cation is bound by residues cysteine 91 and histidine 133. Glutamate 134 is a catalytic residue. Residue histidine 137 coordinates Fe cation.

This sequence belongs to the polypeptide deformylase family. The cofactor is Fe(2+).

It carries out the reaction N-terminal N-formyl-L-methionyl-[peptide] + H2O = N-terminal L-methionyl-[peptide] + formate. Removes the formyl group from the N-terminal Met of newly synthesized proteins. Requires at least a dipeptide for an efficient rate of reaction. N-terminal L-methionine is a prerequisite for activity but the enzyme has broad specificity at other positions. The polypeptide is Peptide deformylase 1 (Shewanella oneidensis (strain ATCC 700550 / JCM 31522 / CIP 106686 / LMG 19005 / NCIMB 14063 / MR-1)).